The chain runs to 98 residues: NADH-ubiquinone oxidoreductase chain 4L (98 aa).

Helical transmembrane passes span 1–21, 29–49, and 61–81; these read MSMV…GLLM, SLLC…ATIL, and IILL…LVTV.

The protein belongs to the complex I subunit 4L family. In terms of assembly, core subunit of respiratory chain NADH dehydrogenase (Complex I) which is composed of 45 different subunits.

The protein localises to the mitochondrion inner membrane. The catalysed reaction is a ubiquinone + NADH + 5 H(+)(in) = a ubiquinol + NAD(+) + 4 H(+)(out). Its function is as follows. Core subunit of the mitochondrial membrane respiratory chain NADH dehydrogenase (Complex I) which catalyzes electron transfer from NADH through the respiratory chain, using ubiquinone as an electron acceptor. Part of the enzyme membrane arm which is embedded in the lipid bilayer and involved in proton translocation. The protein is NADH-ubiquinone oxidoreductase chain 4L (MT-ND4L) of Pusa caspica (Caspian seal).